The chain runs to 228 residues: PKHD-type hydroxylase xcc-b100_1388 (228 aa).

The region spanning 78–180 (RIYPPLFNRY…RVASFFWIQS (103 aa)) is the Fe2OG dioxygenase domain. The Fe cation site is built by His96, Asp98, and His161. Position 171 (Arg171) interacts with 2-oxoglutarate.

The cofactor is Fe(2+). It depends on L-ascorbate as a cofactor.

The chain is PKHD-type hydroxylase xcc-b100_1388 from Xanthomonas campestris pv. campestris (strain B100).